The primary structure comprises 126 residues: Probable prefoldin subunit 6 (126 aa).

This sequence belongs to the prefoldin subunit beta family. As to quaternary structure, heterohexamer of two PFD-alpha type and four PFD-beta type subunits. Expressed in embryonic blastomeres and gonads.

Its subcellular location is the cytoplasm. Binds specifically to cytosolic chaperonin (c-CPN) and transfers target proteins to it. Binds to nascent polypeptide chain and promotes folding in an environment in which there are many competing pathways for nonnative proteins. Required for positioning of the mitotic spindle. The protein is Probable prefoldin subunit 6 (pfd-6) of Caenorhabditis elegans.